The sequence spans 155 residues: UPF0266 membrane protein LMHCC_1856 (155 aa).

3 consecutive transmembrane segments (helical) span residues Ile-8 to Ile-28, Arg-46 to Phe-66, and Pro-70 to Phe-90.

It belongs to the UPF0266 family.

It localises to the cell membrane. The sequence is that of UPF0266 membrane protein LMHCC_1856 from Listeria monocytogenes serotype 4a (strain HCC23).